A 162-amino-acid chain; its full sequence is NADH-quinone oxidoreductase subunit I (162 aa).

4Fe-4S ferredoxin-type domains lie at 54 to 83 (RRYE…IESE) and 93 to 122 (TRYD…ETHI). [4Fe-4S] cluster-binding residues include Cys-63, Cys-66, Cys-69, Cys-73, Cys-102, Cys-105, Cys-108, and Cys-112.

Belongs to the complex I 23 kDa subunit family. In terms of assembly, NDH-1 is composed of 14 different subunits. Subunits NuoA, H, J, K, L, M, N constitute the membrane sector of the complex. Requires [4Fe-4S] cluster as cofactor.

The protein localises to the cell inner membrane. The enzyme catalyses a quinone + NADH + 5 H(+)(in) = a quinol + NAD(+) + 4 H(+)(out). Functionally, NDH-1 shuttles electrons from NADH, via FMN and iron-sulfur (Fe-S) centers, to quinones in the respiratory chain. The immediate electron acceptor for the enzyme in this species is believed to be ubiquinone. Couples the redox reaction to proton translocation (for every two electrons transferred, four hydrogen ions are translocated across the cytoplasmic membrane), and thus conserves the redox energy in a proton gradient. In Paraburkholderia xenovorans (strain LB400), this protein is NADH-quinone oxidoreductase subunit I.